The primary structure comprises 1338 residues: Serine/threonine-protein kinase cek1 (1338 aa).

Residues 28 to 98 (SKDENLQPSI…RAVNCLLKDD (71 aa)) form the PAS domain. The disordered stretch occupies residues 484-554 (PDFAIGSPMS…GRSSLFSRGR (71 aa)). Positions 491–501 (PMSQDSSNYSS) are enriched in polar residues. Ser525 is subject to Phosphoserine. The segment covering 541-550 (PASNGRSSLF) has biased composition (polar residues). The Protein kinase domain maps to 589-958 (YKILKPISKG…VEEIKAHPFF (370 aa)). ATP-binding positions include 595–603 (ISKGAFGSV) and Lys618. Residue Asp713 is the Proton acceptor of the active site. Ser748 carries the post-translational modification Phosphoserine. Residues 813-842 (ENSAEDSPTATNTPTSQVDESNIFRSTDSP) are compositionally biased toward polar residues. 3 disordered regions span residues 813–844 (ENSA…SPRV), 1010–1035 (KLEE…LRSN), and 1159–1185 (SSTM…TSSD). An AGC-kinase C-terminal domain is found at 959–1057 (KSVNWDTILE…RNLDFLNKAN (99 aa)). Over residues 1159–1174 (SSTMSASQSQSSMHTA) the composition is skewed to low complexity. The residue at position 1211 (Ser1211) is a Phosphoserine.

Belongs to the protein kinase superfamily. Ser/Thr protein kinase family.

The catalysed reaction is L-seryl-[protein] + ATP = O-phospho-L-seryl-[protein] + ADP + H(+). The enzyme catalyses L-threonyl-[protein] + ATP = O-phospho-L-threonyl-[protein] + ADP + H(+). In terms of biological role, may facilitate the progression of anaphase through direct or indirect interaction with the cut8 protein. This chain is Serine/threonine-protein kinase cek1 (cek1), found in Schizosaccharomyces pombe (strain 972 / ATCC 24843) (Fission yeast).